The primary structure comprises 436 residues: Prenyltransferase nscD (436 aa).

The protein belongs to the tryptophan dimethylallyltransferase family.

It functions in the pathway secondary metabolite biosynthesis. Functionally, prenyltransferase; part of the gene cluster that mediates the biosynthesis of neosartoricin B, a prenylated anthracenone that probably exhibits T-cell antiproliferative activity, suggestive of a physiological role as an immunosuppressive agent. The non-reducing polyketide synthase nscA probably synthesizes and cyclizes the decaketide backbone. The hydrolase nscB then mediates the product release through hydrolysis followed by spontaneous decarboxylation. The prenyltransferase nscD catalyzes the addition of the dimethylallyl group to the aromatic C5. The FAD-dependent monooxygenase nscC is then responsible for the stereospecific hydroxylation at C2. Neosartoricin B can be converted into two additional compounds neosartoricins C and D. Neosartoricin C is a spirocyclic compound that is cyclized through the attack of C3 hydroxyl on C14, followed by dehydration. On the other hand, neosartoricin D is a further cyclized compound in which attack of C2 on C14 in neosartoricin C results in the formation of the acetal-containing dioxabicyclo-octanone ring. Both of these compounds are novel and possibly represent related metabolites of the gene cluster. The protein is Prenyltransferase nscD of Trichophyton rubrum (strain ATCC MYA-4607 / CBS 118892) (Athlete's foot fungus).